The sequence spans 201 residues: LexA repressor 1 (201 aa).

The H-T-H motif DNA-binding region spans 27 to 47 (LAEIAQAFGFASRNAAQKHVQ). Residues Ser-122 and Lys-159 each act as for autocatalytic cleavage activity in the active site.

It belongs to the peptidase S24 family. As to quaternary structure, homodimer.

The enzyme catalyses Hydrolysis of Ala-|-Gly bond in repressor LexA.. Represses a number of genes involved in the response to DNA damage (SOS response), including recA and lexA. In the presence of single-stranded DNA, RecA interacts with LexA causing an autocatalytic cleavage which disrupts the DNA-binding part of LexA, leading to derepression of the SOS regulon and eventually DNA repair. This chain is LexA repressor 1, found in Xanthomonas oryzae pv. oryzae (strain KACC10331 / KXO85).